Consider the following 304-residue polypeptide: Probable cobalamin biosynthesis protein CobD (304 aa).

Helical transmembrane passes span 2–22 (IVVL…KEYI), 50–70 (ILFS…AVYL), 73–93 (FILV…FSIT), 147–167 (VDGY…GAFI), and 284–304 (AAYS…AVFL).

The protein belongs to the CobD/CbiB family.

It localises to the cell membrane. Its pathway is cofactor biosynthesis; adenosylcobalamin biosynthesis. In terms of biological role, converts cobyric acid to cobinamide by the addition of aminopropanol on the F carboxylic group. The polypeptide is Probable cobalamin biosynthesis protein CobD (Thermoplasma volcanium (strain ATCC 51530 / DSM 4299 / JCM 9571 / NBRC 15438 / GSS1)).